Here is a 76-residue protein sequence, read N- to C-terminus: Dermaseptin-B4 (76 aa).

An N-terminal signal peptide occupies residues Met1 to Cys22. The propeptide occupies Glu23–Glu43. Glutamine amide is present on Gln73. The propeptide occupies Glu75–Gln76.

Belongs to the frog skin active peptide (FSAP) family. Dermaseptin subfamily. In terms of tissue distribution, expressed by the skin glands.

It localises to the secreted. Its function is as follows. Potent antimicrobial peptide with potent activity against Gram-positive and Gram-negative bacteria. Probably acts by disturbing membrane functions with its amphipathic structure. Has an activity of stimulation of insulin release, which may protect the species from being eaten by predators by causing fatal hypoglycemia. Has hemolytic activity. The sequence is that of Dermaseptin-B4 from Phyllomedusa bicolor (Two-colored leaf frog).